A 117-amino-acid chain; its full sequence is Ig heavy chain V region 5-84 (117 aa).

Residues 1–19 (MNFGLSLIFLVLVLKGVLC) form the signal peptide. The tract at residues 20 to 49 (EVKLVESGGGLVQPGGSLKLSCAASGFTFS) is framework-1. The cysteines at positions 41 and 115 are disulfide-linked. Residues 50-54 (SYTMS) form a complementarity-determining-1 region. Residues 55-68 (WVRQTPEKRLEWVA) are framework-2. Residues 69-85 (YISNGGGSTYYPDTVKG) are complementarity-determining-2. Positions 86–117 (RFTISRDNAKNNLYLQMSSLKSEDTAMYYCAR) are framework-3.

The polypeptide is Ig heavy chain V region 5-84 (Mus musculus (Mouse)).